The primary structure comprises 471 residues: V-type ATP synthase beta chain (471 aa).

This sequence belongs to the ATPase alpha/beta chains family.

Functionally, produces ATP from ADP in the presence of a proton gradient across the membrane. The V-type beta chain is a regulatory subunit. The protein is V-type ATP synthase beta chain of Streptococcus pyogenes serotype M49 (strain NZ131).